The following is a 181-amino-acid chain: Oligoribonuclease (181 aa).

Positions 8-171 (LIWIDLEMTG…QDIQESIAEL (164 aa)) constitute an Exonuclease domain. Tyr-129 is an active-site residue.

The protein belongs to the oligoribonuclease family.

It localises to the cytoplasm. In terms of biological role, 3'-to-5' exoribonuclease specific for small oligoribonucleotides. In Shewanella baltica (strain OS155 / ATCC BAA-1091), this protein is Oligoribonuclease.